The following is a 189-amino-acid chain: Threonylcarbamoyl-AMP synthase (189 aa).

Positions 9-189 (ASAQRKLSVY…IDGETGKRLR (181 aa)) constitute a YrdC-like domain.

It belongs to the SUA5 family. TsaC subfamily.

It localises to the cytoplasm. It carries out the reaction L-threonine + hydrogencarbonate + ATP = L-threonylcarbamoyladenylate + diphosphate + H2O. Its function is as follows. Required for the formation of a threonylcarbamoyl group on adenosine at position 37 (t(6)A37) in tRNAs that read codons beginning with adenine. Catalyzes the conversion of L-threonine, HCO(3)(-)/CO(2) and ATP to give threonylcarbamoyl-AMP (TC-AMP) as the acyladenylate intermediate, with the release of diphosphate. The sequence is that of Threonylcarbamoyl-AMP synthase from Neisseria meningitidis serogroup C (strain 053442).